The following is a 443-amino-acid chain: Methyl-coenzyme M reductase II subunit beta (443 aa).

Y367 serves as a coordination point for coenzyme M. Coenzyme B is bound at residue G369.

Belongs to the methyl-coenzyme M reductase beta subunit family. MCR is a hexamer of two alpha, two beta, and two gamma chains, forming a dimer of heterotrimers. It depends on coenzyme F430 as a cofactor.

It catalyses the reaction coenzyme B + methyl-coenzyme M = methane + coenzyme M-coenzyme B heterodisulfide. It participates in one-carbon metabolism; methyl-coenzyme M reduction; methane from methyl-coenzyme M: step 1/1. In terms of biological role, component of the methyl-coenzyme M reductase (MCR) I that catalyzes the reductive cleavage of methyl-coenzyme M (CoM-S-CH3 or 2-(methylthio)ethanesulfonate) using coenzyme B (CoB or 7-mercaptoheptanoylthreonine phosphate) as reductant which results in the production of methane and the mixed heterodisulfide of CoB and CoM (CoM-S-S-CoB). This is the final step in methanogenesis. This Methanothermus fervidus (strain ATCC 43054 / DSM 2088 / JCM 10308 / V24 S) protein is Methyl-coenzyme M reductase II subunit beta (mrtB).